The primary structure comprises 621 residues: Protein CASP (621 aa).

Over 1 to 574 (MEIVSRAWES…ILATPKSRTV (574 aa)) the chain is Cytoplasmic. 2 coiled-coil regions span residues 101–445 (LLKG…VQDI) and 473–525 (ILTS…FLQS). Residues 575–595 (FFSYLLILHALIMLVLYKFAF) form a helical; Anchor for type IV membrane protein membrane-spanning segment. Over 596–621 (DQSVVRDAETECEYKFHQHMLDNHKQ) the chain is Lumenal.

Belongs to the CASP family.

Its subcellular location is the golgi apparatus membrane. In terms of biological role, may be involved in intra-Golgi retrograde transport. The sequence is that of Protein CASP (ceh-44) from Caenorhabditis elegans.